The chain runs to 1450 residues: MEAGYAEIAAVQFNIAGDNDHKRQGVMEVTISNLFEGTLPAEGGIYDARMGTTDHHYKCITCSHQRKQCMGHPGILQMHAPVLQPLFIAEIRRWLRVICLNCGAPIVDLKRYEHLIRPKRLIEAASSQTEGKQCYVCKAVHPKIVKDSEDYFTFWVDQQGKIDKLYPQIIREIFSRVTYDTVVKLGRSKNSHPEKLVLKAIQIPPISIRPGIRLGIGSGPQSFHDINNVIQYLVRKNLLIPKDLQIVRGQKIPLNIDRNLQTIQQLYYNFLLDSVSTTATQGGTGKRGIVMGARPAPSIMRRLPRKEGRIRKSLLGSQVWSISRSTICGNSDLHLDEVGYPISFARTLQVAETVQHYNINRLMPYFLNGKRQYPGCSRVYKQITQSVHDIEGLKQDFRLEVGDILYRDVVTGDVAFFNRQPSLERSSIGVHRIVVLENPKISTFQMNVSACAWYNADFDGDQMNLWVPWSVMSRVEAELLCSVRNWFISTKSSGPVNGQVQDSTVGSFLLTRTNTPMGKNVMNKLHAMGLFQTTQTDPPCFANYSPTDLLDGKSVVSMLLKQTPINYQRAPTWYSEVYAPYMHYNKQDISTQIRNGELIEGVLDKKAVGAGSSGGIYHLISRRYGPQQALKMIFATQQLALNYVRNAGFTVSTADMLLTPEAHQEVQEIINKLLLESEEINNRLLHGDIMPPIGLTTHDFYEKLQLNALKFPDRILKPIMNSINPETNGLFQMVATGAKGSNPNMIHIMAGIGQIEINTQRIQPQFSFGRTLVYYPRFALEAQAYGFICNSYIAGLTSPEFIFGEMNGRFDLINKALSTSSTGYANRKAIFGLQSCIVDYYRRVSIDTRLVQQLYGEDGLDARQLETVRFETIMLSDQELEDKFKYTGIQSPLFEEEFSRLKKDRDKYRQIFLNVENFNFSQLLTDVRQVPVNVASIVKNILLSSTSGVLPFDEKSILQKYAMVKTFCKNLPYVFINNIQERLQTPIPVYLKRAAALMRMLIRIELATVKTLNITCEQMSAILDLIRLQYTQSLINYGEAVGILAAQSVSEPLTQYMLDSHHRSVAGGTNKSGIVRPQEIFSAKPVEAEQSSEMLLRLKNPEVETNKTYAQEIANSIELITFERLILQWHLLYETYSSTKKNVMYPDFASDVEWMTDFLENHPLLQPPEDIANWCIRLELNKTTMILKSISLESIINSLRAKHPNTYIMHSVENTASGIPIIIRIYLRESAFRRSTNTRMATDEKIAVNVVDKLLNSTIRGIPGIKNANVVKLMRHRVDAQGKLVRLDNIYAIKTNGTNIFGAMLDDNIDPYTIVSSSIGDTMELYGIEAARQKIISEIRTVMGDKGPNHRHLLMYADLMTRTGQVTSLEKAGLNAREPSNVLLRMALSSPVQVLTDAAVDSAVNPIYGIAAPTLMGSVPRIGTMYSDIIMDEKYITENYKSVDSMIDML.

It belongs to the RNA polymerase beta' chain family. Part of the viral DNA-directed RNA polymerase that consists of 8 polII-like subunits (RPB1, RPB2, RPB3, RPB5, RPB6, RPB7, RPB9, RPB10), a capping enzyme and a termination factor.

Its subcellular location is the virion. It carries out the reaction RNA(n) + a ribonucleoside 5'-triphosphate = RNA(n+1) + diphosphate. In terms of biological role, catalytic component of the DNA-directed RNA polymerase (RNAP) that catalyzes the transcription in the cytoplasm of viral DNA into RNA using the four ribonucleoside triphosphates as substrates. Forms the polymerase active center together with RPB2. Part of the core element with the central large cleft, the clamp element that moves to open and close the cleft and the jaws that are thought to grab the incoming DNA template. The protein is DNA-directed RNA polymerase RPB1 homolog of African swine fever virus (strain Badajoz 1971 Vero-adapted) (Ba71V).